The following is a 410-amino-acid chain: Cathepsin D (410 aa).

A signal peptide spans 1–20 (MKTPGVLLLILGLLASSSFA). A propeptide spans 21-64 (IIRIPLRKFTSIRRTMTEVGGSVEDLILKGPITKYSMQSSPKTT) (activation peptide). Positions 79–405 (YYGDIGIGTP…DRDNNRVGFA (327 aa)) constitute a Peptidase A1 domain. 2 disulfide bridges follow: cysteine 91-cysteine 160 and cysteine 110-cysteine 117. Residue aspartate 97 is part of the active site. A glycan (N-linked (GlcNAc...) asparagine) is linked at asparagine 134. Asparagine 261 carries an N-linked (GlcNAc...) (high mannose) asparagine glycan. A disulfide bridge links cysteine 284 with cysteine 288. Aspartate 293 is a catalytic residue. A disulfide bridge connects residues cysteine 327 and cysteine 364.

The protein belongs to the peptidase A1 family. Consists of a light chain and a heavy chain. Interacts with ADAM30; this leads to activation of CTSD. Interacts with GRN; stabilizes CTSD; increases its proteolytic activity. In terms of processing, N- and O-glycosylated. Undergoes proteolytic cleavage and activation by ADAM30.

It localises to the lysosome. The protein localises to the melanosome. The protein resides in the secreted. It is found in the extracellular space. The enzyme catalyses Specificity similar to, but narrower than, that of pepsin A. Does not cleave the 4-Gln-|-His-5 bond in B chain of insulin.. Functionally, acid protease active in intracellular protein breakdown. Plays a role in APP processing following cleavage and activation by ADAM30 which leads to APP degradation. This is Cathepsin D (Ctsd) from Mus musculus (Mouse).